We begin with the raw amino-acid sequence, 144 residues long: D-aminoacyl-tRNA deacylase (144 aa).

The short motif at 136–137 is the Gly-cisPro motif, important for rejection of L-amino acids element; the sequence is GP.

Belongs to the DTD family. As to quaternary structure, homodimer.

Its subcellular location is the cytoplasm. The catalysed reaction is glycyl-tRNA(Ala) + H2O = tRNA(Ala) + glycine + H(+). The enzyme catalyses a D-aminoacyl-tRNA + H2O = a tRNA + a D-alpha-amino acid + H(+). In terms of biological role, an aminoacyl-tRNA editing enzyme that deacylates mischarged D-aminoacyl-tRNAs. Also deacylates mischarged glycyl-tRNA(Ala), protecting cells against glycine mischarging by AlaRS. Acts via tRNA-based rather than protein-based catalysis; rejects L-amino acids rather than detecting D-amino acids in the active site. By recycling D-aminoacyl-tRNA to D-amino acids and free tRNA molecules, this enzyme counteracts the toxicity associated with the formation of D-aminoacyl-tRNA entities in vivo and helps enforce protein L-homochirality. The chain is D-aminoacyl-tRNA deacylase from Aliivibrio fischeri (strain MJ11) (Vibrio fischeri).